A 29-amino-acid chain; its full sequence is Potassium channel toxin alpha-KTx 8.4 (29 aa).

3 disulfides stabilise this stretch: cysteine 3–cysteine 19, cysteine 6–cysteine 24, and cysteine 10–cysteine 26.

The protein belongs to the short scorpion toxin superfamily. Potassium channel inhibitor family. Alpha-KTx 08 subfamily. As to expression, expressed by the venom gland.

Its subcellular location is the secreted. Its function is as follows. Inhibits voltage-gated potassium channels. This Leiurus hebraeus (Hebrew deathstalker scorpion) protein is Potassium channel toxin alpha-KTx 8.4.